The primary structure comprises 118 residues: IgW heavy chain V region W26 (118 aa).

The Ig-like domain occupies 1 to 109 (NIVLTQPESA…PQWGYWGSGT (109 aa)). An intrachain disulfide couples C22 to C93.

Expressed mainly in lymphoid tissues including spleen, epigonal organ and circulating lymphocytes.

The sequence is that of IgW heavy chain V region W26 from Heterodontus francisci (Horn shark).